Consider the following 342-residue polypeptide: Hydrogenase expression/formation protein HupK (342 aa).

It belongs to the HupK family.

In Azotobacter vinelandii, this protein is Hydrogenase expression/formation protein HupK (hupK).